A 123-amino-acid chain; its full sequence is Small ribosomal subunit protein uS13 (123 aa).

Residues 97 to 123 (PVRGQRTRSNARTRKGPRPSRIKKKGK) form a disordered region. Positions 101–123 (QRTRSNARTRKGPRPSRIKKKGK) are enriched in basic residues.

Belongs to the universal ribosomal protein uS13 family. As to quaternary structure, part of the 30S ribosomal subunit. Forms a loose heterodimer with protein S19. Forms two bridges to the 50S subunit in the 70S ribosome.

Functionally, located at the top of the head of the 30S subunit, it contacts several helices of the 16S rRNA. In the 70S ribosome it contacts the 23S rRNA (bridge B1a) and protein L5 of the 50S subunit (bridge B1b), connecting the 2 subunits; these bridges are implicated in subunit movement. Contacts the tRNAs in the A and P-sites. In Fervidobacterium nodosum (strain ATCC 35602 / DSM 5306 / Rt17-B1), this protein is Small ribosomal subunit protein uS13.